Consider the following 174-residue polypeptide: Profilin (174 aa).

Residues 4–9 are pro-rich sequence-binding; that stretch reads YSWENF. The Plasmodium-specific profilin mini-domain motif lies at 47–53; it reads FDKWSLF. Actin-binding stretches follow at residues 99–111 and 151–155; these read KYQF…GLEY and RGNSK.

It belongs to the profilin family. As to quaternary structure, binds actin.

The protein localises to the cytoplasm. It localises to the cytoskeleton. In terms of biological role, essential for the invasive blood stages of the parasite. Binds to proline rich sequences in various regulatory formin-like proteins and also to membrane phospholipids. Binds to actin and affects the structure of the cytoskeleton. Weakly sequesters actin monomers. The chain is Profilin from Plasmodium berghei.